Here is a 125-residue protein sequence, read N- to C-terminus: UPF0325 protein Ping_0715 (125 aa).

It belongs to the UPF0325 family.

The protein is UPF0325 protein Ping_0715 of Psychromonas ingrahamii (strain DSM 17664 / CCUG 51855 / 37).